The primary structure comprises 401 residues: Argininosuccinate synthase (401 aa).

8–16 (AYSGGLDTS) is a binding site for ATP. Y87 is a binding site for L-citrulline. Residue G117 participates in ATP binding. L-aspartate is bound by residues T119, N123, and D124. N123 provides a ligand contact to L-citrulline. The L-citrulline site is built by R127, S175, E259, and Y271.

The protein belongs to the argininosuccinate synthase family. Type 1 subfamily. Homotetramer.

It localises to the cytoplasm. It carries out the reaction L-citrulline + L-aspartate + ATP = 2-(N(omega)-L-arginino)succinate + AMP + diphosphate + H(+). It participates in amino-acid biosynthesis; L-arginine biosynthesis; L-arginine from L-ornithine and carbamoyl phosphate: step 2/3. The chain is Argininosuccinate synthase from Pseudarthrobacter chlorophenolicus (strain ATCC 700700 / DSM 12829 / CIP 107037 / JCM 12360 / KCTC 9906 / NCIMB 13794 / A6) (Arthrobacter chlorophenolicus).